Here is a 488-residue protein sequence, read N- to C-terminus: Phenylalanine--tRNA ligase alpha subunit (488 aa).

L-phenylalanine contacts are provided by residues threonine 332, 371–373, and phenylalanine 410; that span reads QLD. Glutamate 412 lines the Mg(2+) pocket. Residue phenylalanine 435 participates in L-phenylalanine binding.

The protein belongs to the class-II aminoacyl-tRNA synthetase family. Phe-tRNA synthetase alpha subunit type 2 subfamily. As to quaternary structure, tetramer of two alpha and two beta subunits. It depends on Mg(2+) as a cofactor.

Its subcellular location is the cytoplasm. It catalyses the reaction tRNA(Phe) + L-phenylalanine + ATP = L-phenylalanyl-tRNA(Phe) + AMP + diphosphate + H(+). In Aeropyrum pernix (strain ATCC 700893 / DSM 11879 / JCM 9820 / NBRC 100138 / K1), this protein is Phenylalanine--tRNA ligase alpha subunit.